The following is a 1558-amino-acid chain: ABC transporter NFT1 (1558 aa).

Residues 1 to 29 (MIKNGTCPFWERDDLSECARREYIEFKFP) lie on the Extracellular side of the membrane. N-linked (GlcNAc...) asparagine glycosylation is present at Asn-4. The helical transmembrane segment at 30–50 (LFILLTGMIYAFCKVFRAFYL) threads the bilayer. The Cytoplasmic segment spans residues 51-103 (RRKNHTNEAPEFEEQGNGNHEYARFSVLRLKSAWESRSFCNVNNRSTFDKFKK). Residues 104-124 (FIEGAFIVLQLTIHLYILSNM) traverse the membrane as a helical segment. Residues 125 to 130 (PMDNKK) lie on the Extracellular side of the membrane. A helical transmembrane segment spans residues 131–151 (FFHQGFLVQMFLWILLLVVIT). Residues 152–169 (LRLISASQSFRWVLACKR) lie on the Cytoplasmic side of the membrane. The chain crosses the membrane as a helical span at residues 170 to 190 (DLWAVSFYSYASLFTLSILPL). Topologically, residues 191–201 (RSVFIGKIKDK) are extracellular. Residues 202 to 222 (IMVKYIISETFIDLALLLLLS) traverse the membrane as a helical segment. At 223 to 302 (TSSIEGTRYS…SSKKGRLLPN (80 aa)) the chain is on the cytoplasmic side. The helical transmembrane segment at 303 to 323 (IICYFKAVFISQLFLAFVSSF) threads the bilayer. The region spanning 311–621 (FISQLFLAFV…IASTVSLLIQ (311 aa)) is the ABC transmembrane type-1 1 domain. At 324–351 (LNFVPSLLMPRILSYVNDPKSQSWNLVS) the chain is on the extracellular side. The helical transmembrane segment at 352–374 (LYVSSMLVSKIIATTCRGQGLFL) threads the bilayer. At 375-449 (GEKGTMQLRT…VMSIDAFKVS (75 aa)) the chain is on the cytoplasmic side. Residues 410-434 (NASTSFEENPDSSEAEPRKKSSRKD) are disordered. Over residues 424–434 (AEPRKKSSRKD) the composition is skewed to basic and acidic residues. A helical membrane pass occupies residues 450–470 (EAMNTFYLACEAVFMTVTALM). Topologically, residues 471 to 481 (ILYSLLGWSAF) are extracellular. The chain crosses the membrane as a helical span at residues 482–504 (AGTFALLAMIPLNFWCATFYGNY). At 505-558 (QADQLILTDKRTSGISEALNSIRVIKLLAWENLFYQKIINVRDGEIRLLKKKAT) the chain is on the cytoplasmic side. The helical transmembrane segment at 559-579 (IFFLNHLIWFFGPTLVSAITF) threads the bilayer. The Extracellular portion of the chain corresponds to 580–584 (SVFIK). Residues 585-605 (FQNQTLTPTIAFTALSLFAIL) traverse the membrane as a helical segment. Over 606 to 953 (RTPMDQIAST…KFSAYKWLAD (348 aa)) the chain is Cytoplasmic. Positions 651-892 (FGFEDASMEW…NEFLRESINN (242 aa)) constitute an ABC transporter 1 domain. 686–693 (GPTGSGKS) contributes to the ATP binding site. The segment covering 892–901 (NDSKNTTHNQ) has biased composition (polar residues). The interval 892-926 (NDSKNTTHNQIDLKRSTTSKKTKNGDPEGENSQDE) is disordered. Residues 954 to 974 (YFGGLGVVFVFTSSAILIHGI) traverse the membrane as a helical segment. Residues 961–1251 (VFVFTSSAIL…IIKVFSSVEL (291 aa)) enclose the ABC transmembrane type-1 2 domain. At 975 to 1013 (TLSQGFWLRYWLETGSSGSKSTWLYRIVEGHSNIYFILT) the chain is on the extracellular side. A helical transmembrane segment spans residues 1014 to 1034 (YIVIGFVSSFLTSGKVWIAII). The Cytoplasmic segment spans residues 1035–1082 (SGTNVTKKIFAKLLSSILYAKLRFHNVTPTGRIMNRFSKDMDIIDQQL). A helical transmembrane segment spans residues 1083–1105 (IPNFEGLSYSVVVCLWIILLIGY). Residues 1106 to 1109 (VTPQ) lie on the Extracellular side of the membrane. A helical membrane pass occupies residues 1110 to 1132 (FLLFAIPLCALYYTVCTLYLRAS). Topologically, residues 1133–1199 (RELKRIDNIN…ATEWITYRVD (67 aa)) are cytoplasmic. Residues 1200–1220 (IIGTLVLFSSSVMIIMKASYL) form a helical membrane-spanning segment. Residues 1221-1222 (DA) are Extracellular-facing. The helical transmembrane segment at 1223-1243 (GLAGILLSNAFSFTETAQWII) threads the bilayer. At 1244–1558 (KVFSSVELLM…LAKVSFDNKR (315 aa)) the chain is on the cytoplasmic side. An ABC transporter 2 domain is found at 1285 to 1538 (VELKNLSLRY…RNTIFYRLCR (254 aa)). Residue 1319 to 1326 (GRTGAGKS) participates in ATP binding.

The protein belongs to the ABC transporter superfamily. ABCC family. Conjugate transporter (TC 3.A.1.208) subfamily.

Its subcellular location is the membrane. The protein is ABC transporter NFT1 (NFT1) of Saccharomyces cerevisiae (strain YJM789) (Baker's yeast).